A 225-amino-acid chain; its full sequence is Uracil-DNA glycosylase (225 aa).

Residue Asp61 is the Proton acceptor of the active site.

Belongs to the uracil-DNA glycosylase (UDG) superfamily. UNG family.

It localises to the cytoplasm. It carries out the reaction Hydrolyzes single-stranded DNA or mismatched double-stranded DNA and polynucleotides, releasing free uracil.. Its function is as follows. Excises uracil residues from the DNA which can arise as a result of misincorporation of dUMP residues by DNA polymerase or due to deamination of cytosine. In Actinobacillus pleuropneumoniae serotype 5b (strain L20), this protein is Uracil-DNA glycosylase.